The sequence spans 270 residues: Undecaprenyl-diphosphatase (270 aa).

Transmembrane regions (helical) follow at residues 14-34 (GLTE…PTFL), 40-60 (GITF…LYFW), 88-108 (FYII…ETTI), 117-137 (SLIA…DTSG), 146-166 (ITLK…IPGV), 189-209 (FSFL…LSGL), 221-241 (PLLI…AFLL), and 249-269 (LYPF…FINF).

The protein belongs to the UppP family.

Its subcellular location is the cell inner membrane. It carries out the reaction di-trans,octa-cis-undecaprenyl diphosphate + H2O = di-trans,octa-cis-undecaprenyl phosphate + phosphate + H(+). In terms of biological role, catalyzes the dephosphorylation of undecaprenyl diphosphate (UPP). Confers resistance to bacitracin. In Geotalea daltonii (strain DSM 22248 / JCM 15807 / FRC-32) (Geobacter daltonii), this protein is Undecaprenyl-diphosphatase.